We begin with the raw amino-acid sequence, 983 residues long: 26S proteasome regulatory subunit RPN1 (983 aa).

Over residues 1–26 (MSTDKKKEEVPKPETEDLTVKDETKN) the composition is skewed to basic and acidic residues. Disordered stretches follow at residues 1–44 (MSTD…EDQK) and 169–188 (VEKEAEDNSTSTESSPQPPH). PC repeat units follow at residues 415-447 (SAVASIGSIYQWNIDGLQQLDKYLYVDEPEVKA), 448-484 (GGLLGIGIASAGVHHDVEPALLLLQEYINHSDTKIST), 485-519 (AAILGIGIAFAGSKNDEVLGLLLPVVSNTENSLEL), 520-557 (AAIAALALSHVFVGTCNGDITTAVMDNFLERTPLELKS), and 563-595 (LALSLGLLYLGQGEHVDDVLETINAIEHPMTSA). Disordered regions lie at residues 625–644 (AVKSSDEDEDEDNEELSQED) and 662–724 (EPQG…GAND). Positions 630–642 (DEDEDEDNEELSQ) are enriched in acidic residues. The segment covering 688–705 (NVKKEENEEEKTEKSEKT) has biased composition (basic and acidic residues). Residues 706 to 718 (ENDEEEEDEEESK) show a composition bias toward acidic residues. PC repeat units lie at residues 768-799 (LAMGLVSVADPQMKVFDTLTRFSHDPDLDVSM) and 800-834 (NSIFAMGLCGVGTNNARLAQLLRQLASYYSREQDA).

The protein belongs to the proteasome subunit S2 family.

Functionally, acts as a regulatory subunit of the 26 proteasome which is involved in the ATP-dependent degradation of ubiquitinated proteins. The chain is 26S proteasome regulatory subunit RPN1 (RPN1) from Candida glabrata (strain ATCC 2001 / BCRC 20586 / JCM 3761 / NBRC 0622 / NRRL Y-65 / CBS 138) (Yeast).